The following is a 525-amino-acid chain: ATP synthase subunit beta, mitochondrial (525 aa).

The N-terminal 44 residues, 1–44 (MLKKQALSGIRRFSLATKQSFVKTSYKLPRKSWLNTAKFNTIRY), are a transit peptide targeting the mitochondrion. 203–210 (GGAGVGKT) serves as a coordination point for ATP.

It belongs to the ATPase alpha/beta chains family. In terms of assembly, F-type ATPases have 2 components, CF(1) - the catalytic core - and CF(0) - the membrane proton channel. CF(1) has five subunits: alpha(3), beta(3), gamma(1), delta(1), epsilon(1). CF(0) has three main subunits: a, b and c.

The protein resides in the mitochondrion. It localises to the mitochondrion inner membrane. The enzyme catalyses ATP + H2O + 4 H(+)(in) = ADP + phosphate + 5 H(+)(out). Mitochondrial membrane ATP synthase (F(1)F(0) ATP synthase or Complex V) produces ATP from ADP in the presence of a proton gradient across the membrane which is generated by electron transport complexes of the respiratory chain. F-type ATPases consist of two structural domains, F(1) - containing the extramembraneous catalytic core, and F(0) - containing the membrane proton channel, linked together by a central stalk and a peripheral stalk. During catalysis, ATP synthesis in the catalytic domain of F(1) is coupled via a rotary mechanism of the central stalk subunits to proton translocation. Subunits alpha and beta form the catalytic core in F(1). Rotation of the central stalk against the surrounding alpha(3)beta(3) subunits leads to hydrolysis of ATP in three separate catalytic sites on the beta subunits. The chain is ATP synthase subunit beta, mitochondrial (atp2) from Schizosaccharomyces pombe (strain 972 / ATCC 24843) (Fission yeast).